A 155-amino-acid chain; its full sequence is Ribosomal RNA large subunit methyltransferase H (155 aa).

Residues L72, G103, and 122-127 (LSTLTL) contribute to the S-adenosyl-L-methionine site.

The protein belongs to the RNA methyltransferase RlmH family. Homodimer.

It is found in the cytoplasm. It carries out the reaction pseudouridine(1915) in 23S rRNA + S-adenosyl-L-methionine = N(3)-methylpseudouridine(1915) in 23S rRNA + S-adenosyl-L-homocysteine + H(+). Functionally, specifically methylates the pseudouridine at position 1915 (m3Psi1915) in 23S rRNA. The sequence is that of Ribosomal RNA large subunit methyltransferase H from Klebsiella pneumoniae (strain 342).